A 140-amino-acid chain; its full sequence is Flagellar assembly factor FliW (140 aa).

The protein belongs to the FliW family. As to quaternary structure, interacts with translational regulator CsrA and flagellin(s).

The protein localises to the cytoplasm. Its function is as follows. Acts as an anti-CsrA protein, binds CsrA and prevents it from repressing translation of its target genes, one of which is flagellin. Binds to flagellin and participates in the assembly of the flagellum. This is Flagellar assembly factor FliW from Syntrophotalea carbinolica (strain DSM 2380 / NBRC 103641 / GraBd1) (Pelobacter carbinolicus).